Here is a 166-residue protein sequence, read N- to C-terminus: NAD(P)H-quinone oxidoreductase subunit I, chloroplastic (166 aa).

4Fe-4S ferredoxin-type domains follow at residues 55-84 (GRIH…VDWK) and 95-124 (LNYS…MTEE). [4Fe-4S] cluster is bound by residues Cys64, Cys67, Cys70, Cys74, Cys104, Cys107, Cys110, and Cys114.

It belongs to the complex I 23 kDa subunit family. As to quaternary structure, NDH is composed of at least 16 different subunits, 5 of which are encoded in the nucleus. The cofactor is [4Fe-4S] cluster.

The protein resides in the plastid. Its subcellular location is the chloroplast thylakoid membrane. It carries out the reaction a plastoquinone + NADH + (n+1) H(+)(in) = a plastoquinol + NAD(+) + n H(+)(out). It catalyses the reaction a plastoquinone + NADPH + (n+1) H(+)(in) = a plastoquinol + NADP(+) + n H(+)(out). Functionally, NDH shuttles electrons from NAD(P)H:plastoquinone, via FMN and iron-sulfur (Fe-S) centers, to quinones in the photosynthetic chain and possibly in a chloroplast respiratory chain. The immediate electron acceptor for the enzyme in this species is believed to be plastoquinone. Couples the redox reaction to proton translocation, and thus conserves the redox energy in a proton gradient. This chain is NAD(P)H-quinone oxidoreductase subunit I, chloroplastic, found in Lactuca sativa (Garden lettuce).